The following is a 424-amino-acid chain: Hemagglutinin-esterase (424 aa).

The N-terminal stretch at 1–16 is a signal peptide; it reads MFLLPRFVLVSCIIGS. The esterase domain 1 stretch occupies residues 7 to 127; it reads FVLVSCIIGS…SNDIWMQNKG (121 aa). The Virion surface portion of the chain corresponds to 17–392; it reads LGFDNPPTNV…PICVYDPLPI (376 aa). The active-site Nucleophile is S40. An intrachain disulfide couples C44 to C65. N54, N89, N153, N236, and N301 each carry an N-linked (GlcNAc...) asparagine; by host glycan. 3 cysteine pairs are disulfide-bonded: C113–C162, C197–C276, and C205–C249. The segment at 128–266 is receptor binding; sequence LFYTQVYKNM…GNYLAISNEL (139 aa). The segment at 267–379 is esterase domain 2; that stretch reads LLTVPTKAIC…RCPTAADINT (113 aa). C307 and C312 are disulfide-bonded. The N-linked (GlcNAc...) asparagine; by host glycan is linked to N316. Active-site charge relay system residues include D326 and H329. C347 and C371 are disulfide-bonded. N358 carries N-linked (GlcNAc...) asparagine; by host glycosylation. Residues 393-413 form a helical membrane-spanning segment; sequence ILLGILLGVAVIIIVVLLLYF. Residues 414–424 lie on the Intravirion side of the membrane; that stretch reads MVDNGTRLHDA. N-linked (GlcNAc...) asparagine; by host glycosylation occurs at N417.

The protein belongs to the influenza type C/coronaviruses hemagglutinin-esterase family. As to quaternary structure, homodimer; disulfide-linked. Forms a complex with the M protein in the pre-Golgi. Associates then with S-M complex to form a ternary complex S-M-HE. In terms of processing, N-glycosylated in the host RER.

Its subcellular location is the virion membrane. It is found in the host cell membrane. It catalyses the reaction N-acetyl-9-O-acetylneuraminate + H2O = N-acetylneuraminate + acetate + H(+). The enzyme catalyses N-acetyl-4-O-acetylneuraminate + H2O = N-acetylneuraminate + acetate + H(+). Its function is as follows. Structural protein that makes short spikes at the surface of the virus. Contains receptor binding and receptor-destroying activities. Mediates de-O-acetylation of N-acetyl-4-O-acetylneuraminic acid, which is probably the receptor determinant recognized by the virus on the surface of erythrocytes and susceptible cells. This receptor-destroying activity is important for virus release as it probably helps preventing self-aggregation and ensures the efficient spread of the progeny virus from cell to cell. May serve as a secondary viral attachment protein for initiating infection, the spike protein being the major one. May become a target for both the humoral and the cellular branches of the immune system. This is Hemagglutinin-esterase from Bovine coronavirus (strain 98TXSF-110-LUN) (BCoV-LUN).